Here is a 293-residue protein sequence, read N- to C-terminus: HTH-type transcriptional regulator ArgP (293 aa).

The HTH lysR-type domain occupies 4-60 (PDYRTLQALDAVIRERGFERAAQKLCITQSAVSQRIKQLENLFGQPLLVRTIPPHPT). Positions 21–40 (FERAAQKLCITQSAVSQRIK) form a DNA-binding region, H-T-H motif.

This sequence belongs to the LysR transcriptional regulatory family. In terms of assembly, homodimer.

In terms of biological role, controls the transcription of genes involved in arginine and lysine metabolism. The chain is HTH-type transcriptional regulator ArgP from Sodalis glossinidius (strain morsitans).